We begin with the raw amino-acid sequence, 317 residues long: Beta-ketoacyl-[acyl-carrier-protein] synthase III (317 aa).

Active-site residues include Cys-112 and His-244. The segment at 245 to 249 (QANLR) is ACP-binding. Asn-274 is a catalytic residue.

The protein belongs to the thiolase-like superfamily. FabH family. As to quaternary structure, homodimer.

Its subcellular location is the cytoplasm. It catalyses the reaction malonyl-[ACP] + acetyl-CoA + H(+) = 3-oxobutanoyl-[ACP] + CO2 + CoA. Its pathway is lipid metabolism; fatty acid biosynthesis. In terms of biological role, catalyzes the condensation reaction of fatty acid synthesis by the addition to an acyl acceptor of two carbons from malonyl-ACP. Catalyzes the first condensation reaction which initiates fatty acid synthesis and may therefore play a role in governing the total rate of fatty acid production. Possesses both acetoacetyl-ACP synthase and acetyl transacylase activities. Its substrate specificity determines the biosynthesis of branched-chain and/or straight-chain of fatty acids. The polypeptide is Beta-ketoacyl-[acyl-carrier-protein] synthase III (Shigella sonnei (strain Ss046)).